The following is a 51-amino-acid chain: Gene 62 protein (51 aa).

In Mycobacterium (Mycobacteriophage L5), this protein is Gene 62 protein (62).